Consider the following 108-residue polypeptide: Structural protein 1 (108 aa).

A disordered region spans residues 1-20 (MSRVSEYGVPEGVRESDSDT). The Intravirion portion of the chain corresponds to 1-77 (MSRVSEYGVP…LKMQMDRLCN (77 aa)). The chain crosses the membrane as a helical; Signal-anchor for type II membrane protein span at residues 78–98 (VLGVVLQMATLALVTYIAFVV). Residues 99–108 (HTRATSCKRE) lie on the Virion surface side of the membrane.

This sequence belongs to the varicellovirus ORF1 protein family. As to quaternary structure, homodimer. In terms of processing, phosphorylated.

The protein resides in the virion membrane. It localises to the host Golgi apparatus membrane. The chain is Structural protein 1 from Varicella-zoster virus (strain Dumas) (HHV-3).